The following is an 865-amino-acid chain: MSRFFRGGNESSSESSSDEEELYSEEEEEELEDEGDDSDNDGSGDDDSDSDSDADAGGKKKGAAKFLVDDDSSDEEDSDAEVTTKVKSAKDKRLDELESTVTAIANGMKINDWGSIATEFDKLNRQAEKLRTGTTAPKMYIKSIADLEDFMNETLAKQKVTPKKMNATNARGLNAVKQRIKKNNKEYQAQIDAYKADEFEFMMDTEDEEEPAPKPKKAAKVSFDEATAEDEEDDEGFARVGKGGKTLQFTPESIFKHLRSILESRGKKNTDRGEQIKIMEKLGEIAQTPYQRIRVLLALVSSRFDIGTSAGAALSVEHWKAAEKELSLLLTVLDENKDHIVLESAEEWDDDEKPPTLEKGEKYIKIPGSIVSYTERLDDELTRSLQAIDPHTSEYIDRLSDEGALYNIIFRAQLYYEGLRKDASLEIPQESLNRAIMRRLDHVYFKPAQVIKILEENSWKAVGDKASNITPREQTVEAAQLVNVLCNYLFANSEGIHRARAMLCQIYFLALHDDYYKSRDMMLMSHLQETISSFDVLTQILYNRTLVQVGLCAFRKGLVYDAQNTLQDICGSGRQKELLAQGVMIQRFNQVSPEQERLERQRQLPFHMHINLELLECVYLTCSMLLEIPLLAQTGSSPDIKKRIISKTYRRMLEYHERQIFTGPPENTRDHVMQASKALAAGEWKKATSFIHSIKIWELMPNADAIKTMLAKQIQEEGLRTYLFTYAPFYDTLSIETLSNMFELESTKISAVVSKMISHEELAAALDQVKQTVIFRKGVELSRLQSLALTLSDKASSLIESNERTLEQRTQGTSNAFERQGGRGGRGGGRGRGGGRGGPRFGGNTQRQAGGTQFTGGALGAAVRA.

Disordered stretches follow at residues 1 to 92 (MSRF…AKDK) and 206 to 243 (EDEEEPAPKPKKAAKVSFDEATAEDEEDDEGFARVGKG). Acidic residues-rich tracts occupy residues 16–54 (SSDEEELYSEEEEEELEDEGDDSDNDGSGDDDSDSDSDA) and 69–80 (DDDSSDEEDSDA). A compositionally biased stretch (basic and acidic residues) spans 82 to 92 (VTTKVKSAKDK). A compositionally biased stretch (acidic residues) spans 226-235 (ATAEDEEDDE). Residues 606–780 (FHMHINLELL…QTVIFRKGVE (175 aa)) enclose the PCI domain. The segment at 801–865 (SNERTLEQRT…GGALGAAVRA (65 aa)) is disordered. Polar residues predominate over residues 808-817 (QRTQGTSNAF). Residues 822-841 (GRGGRGGGRGRGGGRGGPRF) show a composition bias toward gly residues.

It belongs to the eIF-3 subunit C family. Component of the eukaryotic translation initiation factor 3 (eIF-3) complex.

The protein localises to the cytoplasm. Component of the eukaryotic translation initiation factor 3 (eIF-3) complex, which is involved in protein synthesis of a specialized repertoire of mRNAs and, together with other initiation factors, stimulates binding of mRNA and methionyl-tRNAi to the 40S ribosome. The eIF-3 complex specifically targets and initiates translation of a subset of mRNAs involved in cell proliferation. This Pyricularia oryzae (strain 70-15 / ATCC MYA-4617 / FGSC 8958) (Rice blast fungus) protein is Eukaryotic translation initiation factor 3 subunit C.